A 745-amino-acid chain; its full sequence is Isocitrate dehydrogenase [NADP] 2 (745 aa).

Residues Asn-87 and Ser-89 each coordinate NADP(+). 5 residues coordinate D-threo-isocitrate: Ser-134, Asn-137, Arg-141, Arg-147, and Lys-257. Asp-352 lines the Mg(2+) pocket. The D-threo-isocitrate site is built by Tyr-422 and Arg-550. Residues Asp-551 and Asp-555 each coordinate Mg(2+). Residues Gly-587, Ser-588, Ala-589, His-592, Arg-603, Asp-605, and Arg-652 each coordinate NADP(+).

The protein belongs to the monomeric-type IDH family. As to quaternary structure, may form homotrimers. Also forms homotetramers at low salt concentration, which are dissociated into homodimers, but not into monomers, at high salt concentration (1 M). Mg(2+) serves as cofactor.

It carries out the reaction D-threo-isocitrate + NADP(+) = 2-oxoglutarate + CO2 + NADPH. Catalyzes the oxidative decarboxylation of isocitrate to 2-oxoglutarate and carbon dioxide with the concomitant reduction of NADP(+). Cannot use NAD(+). This is Isocitrate dehydrogenase [NADP] 2 from Mycobacterium tuberculosis (strain ATCC 25618 / H37Rv).